Consider the following 417-residue polypeptide: MSSEKIKLVDEVFGSVKNTITYEQLHNINGKFHNISDKFVENISESISEPTTINSKKKTSELIFSEETLNNVEIIDTEPYLSDYHKHAIDFENDVIMKEPILSLKSEQYTVHPIKYQKVWDNYKDQMKNYWTVEEVDLAKDVNDWNNHLSDDDRNFIMHVLAFFAAADGIVNANIKENLIDVVKIKEAECAYGFQYAMENAHGEMYSLMLTTFVKDDALRNKLINSIKTMPSIKKKADWCNKWIKSDKTYAHKLVAFSIVEGVFFSGSFASIFWLKTREMHVMPGLIISNQFIARDENKHVELACIMYSLLNNRLKESVVYQIIDEAIEIEEEFINDSLPCKLLGMNSELMSQYIKYVADRLLVDLGYRKKFNVDNPFEYMKKIDVFVKANFFEKRNDAYSNANIDNEKKIVFLENF.

Positions 168, 199, and 202 each coordinate Fe cation. The active site involves tyrosine 206. 3 residues coordinate Fe cation: glutamate 261, glutamate 297, and histidine 300.

The protein belongs to the ribonucleoside diphosphate reductase small chain family. In terms of assembly, heterotetramer composed of a homodimer of the large subunit (R1) and a homodimer of the small subunit (R2). Larger multisubunit protein complex are also active, composed of (R1)n(R2)n. Fe cation is required as a cofactor.

The enzyme catalyses a 2'-deoxyribonucleoside 5'-diphosphate + [thioredoxin]-disulfide + H2O = a ribonucleoside 5'-diphosphate + [thioredoxin]-dithiol. In terms of biological role, ribonucleoside-diphosphate reductase holoenzyme provides the precursors necessary for viral DNA synthesis. Allows virus growth in non-dividing cells. Catalyzes the biosynthesis of deoxyribonucleotides from the corresponding ribonucleotides. This Acanthamoeba polyphaga mimivirus (APMV) protein is Ribonucleoside-diphosphate reductase small chain (RNR2).